We begin with the raw amino-acid sequence, 261 residues long: Immediate-early protein IE-0 (261 aa).

An RING-type zinc finger spans residues 212-257 (CNVCKEISTDERFLKPKECCEYAICNACCVNMWKTATTHAKCPACR).

In terms of assembly, interacts with proteins C42 and FP25. Interacts with host beta-tubulin. Interacts with Ac66 and vUb.

The protein resides in the host nucleus. The protein localises to the host cytoplasm. It is found in the virion. Putative viral E3 ligase that plays an essential regulatory role in both viral DNA replication and transcriptional transactivation. The role in transcription has been shown to include activation of gene expression from early viral promoters. Also promotes the efficient egress of nucleocapsids from the host nucleus. May act as an E3 ligase that promotes ubiquitination of nucleocapsids proteins by vUbi and subsequent viral egress for the host nucleus. This is Immediate-early protein IE-0 (IE0) from Lepidoptera (butterflies and moths).